Consider the following 368-residue polypeptide: Alanine racemase (368 aa).

Lysine 40 acts as the Proton acceptor; specific for D-alanine in catalysis. Lysine 40 is subject to N6-(pyridoxal phosphate)lysine. Arginine 134 serves as a coordination point for substrate. The active-site Proton acceptor; specific for L-alanine is the tyrosine 263. Methionine 310 lines the substrate pocket.

This sequence belongs to the alanine racemase family. Requires pyridoxal 5'-phosphate as cofactor.

It catalyses the reaction L-alanine = D-alanine. The protein operates within amino-acid biosynthesis; D-alanine biosynthesis; D-alanine from L-alanine: step 1/1. In terms of biological role, catalyzes the interconversion of L-alanine and D-alanine. May also act on other amino acids. The polypeptide is Alanine racemase (alr) (Listeria monocytogenes serotype 4a (strain HCC23)).